A 268-amino-acid polypeptide reads, in one-letter code: Microtubule-associated protein RP/EB family member 1 (268 aa).

Residue A2 is modified to N-acetylalanine. In terms of domain architecture, Calponin-homology (CH) spans 14-116; it reads NLSRHDMLAW…FVQWFKKFFD (103 aa). An N6-crotonyllysine modification is found at K66. Phosphotyrosine is present on Y124. Residues 124–268 form an interaction with MTUS2/TIP150 region; it reads YDPVAARQGQ…GGPQEEQEEY (145 aa). The tract at residues 146 to 180 is disordered; sequence LSKPKKPLGSSTAAPQRPIATQRTTAAPKAGPGMV. Over residues 154–170 the composition is skewed to polar residues; the sequence is GSSTAAPQRPIATQRTT. Phosphoserine is present on S155. An EB1 C-terminal domain is found at 185–255; sequence GVGNGDDEAA…LYATDEGFVI (71 aa). The interval 206-211 is interaction with APC; that stretch reads TVEDLE. The tract at residues 208–268 is DCTN1-binding; the sequence is EDLEKERDFY…GGPQEEQEEY (61 aa). K220 carries the post-translational modification N6-acetyllysine. The interval 220 to 242 is APC-binding; the sequence is KLRNIELICQENEGENDPVLQRI. Residues 232 to 255 form an interaction with SKA1 region; that stretch reads EGENDPVLQRIVDILYATDEGFVI.

Belongs to the MAPRE family. In terms of assembly, homodimer. Heterodimer with MAPRE3. Interacts (via C-terminal residues 206-211) with APC (via C-terminal residues 2674-2845); the interaction inhibits association with and bundling of F-actin. Interacts with DCTN1, DIAPH1 and DIAPH2. Interacts with DCTN2, TERF1 and dynein intermediate chain. Interacts with CLASP2, DST, KIF2C and STIM1; probably required for their targeting to the growing microtubule plus ends. Interacts with MTUS2; interaction is direct and probably targets MTUS2 to microtubules. Interacts (via C-terminus) with SKA1 (via SXIP motif); the interaction is direct and stabilizes the kinetochore-microtubule attachment of the SKA1 complex. Interacts with APC2. Interacts with CLASP1. Interacts (via C-terminus) with CLIP1. Interacts with SLAIN2 and SLAIN1. Interacts with MACF1. Interacts with KIF18B; this interaction is required for efficient accumulation of KIF18B at microtubule plus ends. Interacts with MISP. Interacts with RABL2/RABL2A; binds preferentially to GTP-bound RABL2. Interacts with KCNAB2. Interacts with KNSTRN. Interacts with NCKAP5L. Interacts with AKAP9. Interacts with PDE4DIP isoform 2/MMG8/SMYLE; this interaction is required for its recruitment to the Golgi apparatus. May form a pericentrosomal complex with AKAP9, CDK5RAP2 and PDE4DIP isoform 2/MMG8/SMYLE; within this complex, MAPRE1 binding to CDK5RAP2 may be mediated by PDE4DIP. Contrary to other mammalian species, does not interact with CDK5RAP2, possibly due to the lack of conservation of the MAPRE1-binding motif in mouse CDK5RAP2. Interacts with AKNA. Interacts with GAS2L1, GAS2L2, and GAS2L3. Interacts with RARRES1 and AGBL2. In terms of processing, acetylation at Lys-220 by KAT2B/PCAF promotes dynamic kinetochore-microtubule interactions in early mitosis. Crotonylated by KAT5 during mitosis, promoting astral microtubule plasticity and dynamic connection between astral microtubules and the cortex during mitotic chromosome segregation, thereby ensuring accurate spindle positioning in mitosis. Decrotonylated by HDAC3. As to expression, expressed within the midpiece of sperm tail (at protein level).

It localises to the cytoplasm. It is found in the cytoskeleton. The protein localises to the microtubule organizing center. Its subcellular location is the centrosome. The protein resides in the spindle. It localises to the spindle pole. Its function is as follows. Plus-end tracking protein (+TIP) that binds to the plus-end of microtubules and regulates the dynamics of the microtubule cytoskeleton. Recruits other +TIP proteins to microtubules by binding to a conserved Ser-X-Leu-Pro (SXLP) motif in their polypeptide chains. Promotes cytoplasmic microtubule nucleation and elongation. Involved in mitotic spindle positioning by stabilizing microtubules and promoting dynamic connection between astral microtubules and the cortex during mitotic chromosome segregation. Assists chromosome alignment in metaphase by recruiting the SKA complex to the spindle and stabilizing its interactions with microtubule bundles (K-fibers). Also acts as a regulator of minus-end microtubule organization: interacts with the complex formed by AKAP9 and PDE4DIP, leading to recruit CAMSAP2 to the Golgi apparatus, thereby tethering non-centrosomal minus-end microtubules to the Golgi, an important step for polarized cell movement. Promotes elongation of CAMSAP2-decorated microtubule stretches on the minus-end of microtubules. Acts as a regulator of autophagosome transport via interaction with CAMSAP2. Functions downstream of Rho GTPases and DIAPH1 in stable microtubule formation. May play a role in cell migration. The protein is Microtubule-associated protein RP/EB family member 1 (Mapre1) of Mus musculus (Mouse).